Here is a 465-residue protein sequence, read N- to C-terminus: UDP-N-acetylmuramate--L-alanine ligase (465 aa).

ATP is bound at residue 115-121 (GTHGKTT).

It belongs to the MurCDEF family.

It localises to the cytoplasm. The enzyme catalyses UDP-N-acetyl-alpha-D-muramate + L-alanine + ATP = UDP-N-acetyl-alpha-D-muramoyl-L-alanine + ADP + phosphate + H(+). Its pathway is cell wall biogenesis; peptidoglycan biosynthesis. Functionally, cell wall formation. This Renibacterium salmoninarum (strain ATCC 33209 / DSM 20767 / JCM 11484 / NBRC 15589 / NCIMB 2235) protein is UDP-N-acetylmuramate--L-alanine ligase.